Reading from the N-terminus, the 944-residue chain is MSALGRYDRHCDSINSDFGDSVRSCGPEQEELHYIPIRVLGHGAYGEATLYRRTEDDSLVVWKEVGLARLSEKERRDALNEIVILSLLQHDNIIAYYNHFLDSNTLLIELEYCNGGNLFDKIVHQKAQLFQEETVLWYLFQIVSAVSCIHKAGILHRDIKTLNIFLTKANLIKLGDYGLAKQLSSEYSMAETCVGTLYYMSPEICQGVKYSFKSDIWAVGCVLYELLTLTRTFDATNPLNLCVKIVQGNWAVGLDNTVYTQELIEVVHACLEQDPEKRPTADEILERPILSWRRRDMEEKVSMLNRSNKKPRTGTVTEAPIAVVTSRSSEVYVWGGGKTTPQKLDVFKGGWRARQVCAGDAHFAVVTVEKELYTWVNMQGGSKLHGQLGHGDRASYRQPKHVEKLQGKSVQKVSCGSDFTVCITDEGQLYSFGSDYYGCLGVNQSAGSEVLEPLLVDFFLNEPVDQVSCGDSHIMALTRSKSVYSWGCGEYGRLGLDSEDDVYSPQKVEVQRGLCIVNVCCGSDGSFLLTLTGKVLACGLNEHNKLGLNQYTAGIINHEAFQEVPYTTSLTLAKQLSFYKIRSISPGRTHTAAIDERGRLLTFGSNKCGQLGVGDYRKHLGINLLGGPLGGKQVIRVSCGDEFTTAATADNHIFAWGNGGNGRLAMTPNERPQGSDICTSWPRPIFGSLHHVTDLSCRGWHTILIVEKVLNSKTIRSNSSGLSIGTLAQSCSSGGSGSREEDSDRESLTSDPSRGFRGTIEAEPETGPFNTTENMESSSCPSWLRQELEEAEFIPMPDTPNFVSAESSQNGTTSMQDVRETPPDALEKPSFQACTCSTLQEEVRKLQDLVSTYRHEQELLCRENSRLALEVQELNGKLQSAMQMNQVVNKHGEAIHQIQKQLSLHWKSSPPSSGNPEMSREDSDAESWCFLGTEACRSSSGTPM.

Residues 34 to 290 (YIPIRVLGHG…ADEILERPIL (257 aa)) enclose the Protein kinase domain. ATP is bound by residues 40–48 (LGHGAYGEA) and lysine 63. Catalysis depends on aspartate 158, which acts as the Proton acceptor. Threonine 192 is modified (phosphothreonine; by autocatalysis). RCC1 repeat units follow at residues 370 to 426 (KELY…ITDE), 427 to 480 (GQLY…LTRS), 481 to 532 (KSVY…LTLT), 533 to 597 (GKVL…IDER), 598 to 650 (GRLL…ATAD), and 651 to 708 (NHIF…IVEK). Disordered regions lie at residues 726-782 (TLAQ…SCPS) and 794-825 (IPMP…PPDA). The segment covering 738-748 (SREEDSDRESL) has biased composition (basic and acidic residues). Polar residues-rich tracts occupy residues 768 to 781 (PFNT…SSCP) and 801 to 816 (NFVS…TSMQ). The stretch at 835 to 890 (TCSTLQEEVRKLQDLVSTYRHEQELLCRENSRLALEVQELNGKLQSAMQMNQVVNK) forms a coiled coil. Positions 906–925 (WKSSPPSSGNPEMSREDSDA) are disordered.

It belongs to the protein kinase superfamily. NEK Ser/Thr protein kinase family. NIMA subfamily. As to quaternary structure, homodimer. Mg(2+) serves as cofactor. Autophosphorylated on serine and threonine residues.

The protein localises to the cytoplasm. It carries out the reaction L-seryl-[protein] + ATP = O-phospho-L-seryl-[protein] + ADP + H(+). It catalyses the reaction L-threonyl-[protein] + ATP = O-phospho-L-threonyl-[protein] + ADP + H(+). In terms of biological role, pleiotropic regulator of mitotic progression, participating in the control of spindle dynamics and chromosome separation. Important for G1/S transition and S phase progression. Phosphorylates nek6 and nek7 and stimulates their activity. This is Serine/threonine-protein kinase Nek9 (nek9) from Xenopus laevis (African clawed frog).